Consider the following 337-residue polypeptide: Integrase/recombinase (337 aa).

One can recognise a Core-binding (CB) domain in the interval 14 to 94; the sequence is VKVLDQLRER…ALLFFYGKVL (81 aa). Residues 112–328 enclose the Tyr recombinase domain; it reads RLPVVLTPDE…GGAGVRSPLD (217 aa). Residues arginine 146, lysine 171, histidine 277, arginine 280, and histidine 303 contribute to the active site. Tyrosine 312 serves as the catalytic O-(3'-phospho-DNA)-tyrosine intermediate.

Belongs to the 'phage' integrase family.

Its function is as follows. Putative integrase believed to be involved in the insertion of antibiotic resistance genes into plasmids and transposons. This is Integrase/recombinase (int) from Escherichia coli.